We begin with the raw amino-acid sequence, 89 residues long: Small ribosomal subunit protein uS15 (89 aa).

This sequence belongs to the universal ribosomal protein uS15 family. Part of the 30S ribosomal subunit. Forms a bridge to the 50S subunit in the 70S ribosome, contacting the 23S rRNA.

Its function is as follows. One of the primary rRNA binding proteins, it binds directly to 16S rRNA where it helps nucleate assembly of the platform of the 30S subunit by binding and bridging several RNA helices of the 16S rRNA. Functionally, forms an intersubunit bridge (bridge B4) with the 23S rRNA of the 50S subunit in the ribosome. This Prochlorococcus marinus subsp. pastoris (strain CCMP1986 / NIES-2087 / MED4) protein is Small ribosomal subunit protein uS15.